A 456-amino-acid chain; its full sequence is Equilibrative nucleoside transporter 1 (456 aa).

Residues 2–12 (TTSHQPQDRYK) are Cytoplasmic-facing. Residues 13–29 (AVWLIFFMLGLGTLLPW) form a helical membrane-spanning segment. Topologically, residues 30 to 82 (NFFMTATQYFTNRLDMSQNVSLVTAELSKDAQASAAPAAPLPERNSLSAIFNN) are extracellular. Asn48 carries an N-linked (GlcNAc...) asparagine glycan. A helical transmembrane segment spans residues 83 to 107 (VMTLCAMLPLLLFTYLNSFLHQRIP). Topologically, residues 108 to 111 (QSVR) are cytoplasmic. The chain crosses the membrane as a helical span at residues 112-130 (ILGSLVAILLVFLITAILV). Over 131–138 (KVQLDALP) the chain is Extracellular. The helical transmembrane segment at 139-157 (FFVITMIKIVLINSFGAIL) threads the bilayer. Topologically, residues 158-174 (QGSLFGLAGLLPASYTA) are cytoplasmic. A helical transmembrane segment spans residues 175-199 (PIMSGQGLAGFFASVAMICAIASGS). The Extracellular segment spans residues 200–206 (ELSESAF). Residues 207–227 (GYFITACAVIILTIICYLGLP) traverse the membrane as a helical segment. The Cytoplasmic segment spans residues 228-291 (RLEFYRYYQQ…IKAILKNISV (64 aa)). 3 positions are modified to phosphoserine: Ser254, Ser269, and Ser273. A compositionally biased stretch (basic and acidic residues) spans 254–266 (SKGEEPRAGKEES). The segment at 254–276 (SKGEEPRAGKEESGVSVSNSQPT) is disordered. Residues 292–311 (LAFSVCFIFTITIGMFPAVT) form a helical membrane-spanning segment. Residues 312–323 (VEVKSSIAGSST) lie on the Extracellular side of the membrane. A helical transmembrane segment spans residues 324–342 (WERYFIPVSCFLTFNIFDW). Over 343 to 359 (LGRSLTAVFMWPGKDSR) the chain is Cytoplasmic. Residues 360-378 (WLPSLVLARLVFVPLLLLC) form a helical membrane-spanning segment. Residues 379–393 (NIKPRRYLTVVFEHD) lie on the Extracellular side of the membrane. The helical transmembrane segment at 394-413 (AWFIFFMAAFAFSNGYLASL) threads the bilayer. At 414-431 (CMCFGPKKVKPAEAETAG) the chain is on the cytoplasmic side. The chain crosses the membrane as a helical span at residues 432-452 (AIMAFFLCLGLALGAVFSFLF). The Extracellular segment spans residues 453 to 456 (RAIV).

This sequence belongs to the SLC29A/ENT transporter (TC 2.A.57) family. As to quaternary structure, identified in a complex with STOM. Post-translationally, glycosylated. As to expression, expressed in testis at the blood-testis barrier (at protein level). Detected in erythrocytes (at protein level). Expressed at relatively high levels in cerebral cortex, particularly the frontal and parietal lobes, and the thalamus and basal ganglia (at protein level). In the midbrain expressed at moderate levels, whereas in the other areas of the brainstem, namely medulla and pons, cerebellum and the hippocampus expressed at lower amounts when compared to the other brain regions (at protein level). Expressed in Langerhans cells and lymphocytes in the pancreas (at protein level). Expressed in kidney, in polarized renal epithelial cells. Expressed in adipose tissues. Expressed in placenta. Expressed in small intestine.

Its subcellular location is the basolateral cell membrane. It localises to the apical cell membrane. The protein resides in the cell membrane. It carries out the reaction adenosine(in) = adenosine(out). The catalysed reaction is guanosine(in) = guanosine(out). It catalyses the reaction inosine(in) = inosine(out). The enzyme catalyses uridine(out) = uridine(in). It carries out the reaction thymidine(in) = thymidine(out). The catalysed reaction is cytidine(in) = cytidine(out). It catalyses the reaction adenine(out) = adenine(in). The enzyme catalyses guanine(out) = guanine(in). It carries out the reaction thymine(out) = thymine(in). The catalysed reaction is uracil(in) = uracil(out). It catalyses the reaction hypoxanthine(out) = hypoxanthine(in). Its activity is regulated as follows. Transporter activity is sensitive to low concentrations of the inhibitor nitrobenzylmercaptopurine riboside (NBMPR). Inhibited by dilazep. Inhibited by dipyridamole. Inhibited by hypoxanthine. Inhibited by azidothymidine (AZT). Inhibited by dideoxycytidine (ddC). Inhibited by dideoxyinosine (ddI). Inhibited by draflazine. Inhibited by soluflazine. Inhibited by cladribine. Inhibited by capecitabine. Inhibited by clofarabine. Inhibited by ribavirin. Modestly inhibited by acyclovir. Modestly inhibited by 5-fluorouracil. In terms of biological role, uniporter involved in the facilitative transport of nucleosides and nucleobases, and contributes to maintaining their cellular homeostasis. Functions as a Na(+)-independent transporter. Involved in the transport of nucleosides such as adenosine, guanosine, inosine, uridine, thymidine and cytidine. Also transports purine nucleobases (hypoxanthine, adenine, guanine) and pyrimidine nucleobases (thymine, uracil). Mediates basolateral nucleoside uptake into Sertoli cells, thereby regulating the transport of nucleosides in testis across the blood-testis barrier. Regulates inosine levels in brown adipocytes tissues (BAT) and extracellular inosine levels, which controls BAT-dependent energy expenditure. In Homo sapiens (Human), this protein is Equilibrative nucleoside transporter 1.